We begin with the raw amino-acid sequence, 232 residues long: Phosphatidylserine decarboxylase proenzyme (232 aa).

Residue S190 is the Schiff-base intermediate with substrate; via pyruvic acid of the active site. S190 is modified (pyruvic acid (Ser); by autocatalysis).

This sequence belongs to the phosphatidylserine decarboxylase family. PSD-A subfamily. In terms of assembly, heterodimer of a large membrane-associated beta subunit and a small pyruvoyl-containing alpha subunit. Pyruvate is required as a cofactor. Post-translationally, is synthesized initially as an inactive proenzyme. Formation of the active enzyme involves a self-maturation process in which the active site pyruvoyl group is generated from an internal serine residue via an autocatalytic post-translational modification. Two non-identical subunits are generated from the proenzyme in this reaction, and the pyruvate is formed at the N-terminus of the alpha chain, which is derived from the carboxyl end of the proenzyme. The post-translation cleavage follows an unusual pathway, termed non-hydrolytic serinolysis, in which the side chain hydroxyl group of the serine supplies its oxygen atom to form the C-terminus of the beta chain, while the remainder of the serine residue undergoes an oxidative deamination to produce ammonia and the pyruvoyl prosthetic group on the alpha chain.

Its subcellular location is the cell membrane. It catalyses the reaction a 1,2-diacyl-sn-glycero-3-phospho-L-serine + H(+) = a 1,2-diacyl-sn-glycero-3-phosphoethanolamine + CO2. Its pathway is phospholipid metabolism; phosphatidylethanolamine biosynthesis; phosphatidylethanolamine from CDP-diacylglycerol: step 2/2. Functionally, catalyzes the formation of phosphatidylethanolamine (PtdEtn) from phosphatidylserine (PtdSer). The protein is Phosphatidylserine decarboxylase proenzyme of Rhodopseudomonas palustris (strain BisA53).